The sequence spans 376 residues: 26S proteasome non-ATPase regulatory subunit 13 (376 aa).

The region spanning 171–338 (SYYKDALRFL…KRVHMTWVQP (168 aa)) is the PCI domain.

The protein belongs to the proteasome subunit S11 family. Component of the 19S proteasome regulatory particle complex. The 26S proteasome consists of a 20S core particle (CP) and two 19S regulatory subunits (RP). The regulatory particle is made of a lid composed of 9 subunits including PSMD13, a base containing 6 ATPases and few additional components.

Component of the 26S proteasome, a multiprotein complex involved in the ATP-dependent degradation of ubiquitinated proteins. This complex plays a key role in the maintenance of protein homeostasis by removing misfolded or damaged proteins, which could impair cellular functions, and by removing proteins whose functions are no longer required. Therefore, the proteasome participates in numerous cellular processes, including cell cycle progression, apoptosis, or DNA damage repair. This is 26S proteasome non-ATPase regulatory subunit 13 (PSMD13) from Bos taurus (Bovine).